We begin with the raw amino-acid sequence, 328 residues long: dTDP-glucose 4,6-dehydratase (328 aa).

Residues 13–14 (FI), 37–40 (DALT), 63–64 (DI), 82–86 (LAAES), and threonine 101 each bind NAD(+). Serine 86 is a substrate binding site. Substrate is bound at residue threonine 126. Residue aspartate 127 is the Proton donor of the active site. Catalysis depends on proton acceptor residues glutamate 128 and tyrosine 150. 150–154 (YSASK) contributes to the NAD(+) binding site. Position 179 (asparagine 179) interacts with substrate. Asparagine 180 serves as a coordination point for NAD(+). Residues 189–190 (KL), 205–207 (PLY), arginine 214, asparagine 249, and 272–276 (DRKGH) contribute to the substrate site.

It belongs to the NAD(P)-dependent epimerase/dehydratase family. dTDP-glucose dehydratase subfamily. Homodimer. NAD(+) serves as cofactor.

The enzyme catalyses dTDP-alpha-D-glucose = dTDP-4-dehydro-6-deoxy-alpha-D-glucose + H2O. Its pathway is antibiotic biosynthesis; streptomycin biosynthesis. In terms of biological role, involved in the biosynthesis of the streptose moiety of streptomycin. Catalyzes the dehydration of dTDP-D-glucose to form dTDP-6-deoxy-D-xylo-4-hexulose via a three-step process involving oxidation, dehydration and reduction. This chain is dTDP-glucose 4,6-dehydratase, found in Streptomyces griseus.